A 660-amino-acid chain; its full sequence is MRPRPILLLLLMFLPMLPAPPPGQPSGRRRGRRSGGSGGGFWGDRADSQPFAIPYIHPTNPFAPDVTAAAGAGPRVRQPARPLGSAWRDQAQRPAAASRRRPTTAGAAPLTAVAPAHDTPPVPDVDSRGAILRRQYNLSTSPLTSSVATGTNLVLYAAPLSPLLPLQDGTNTHIMATEASNYAQYRVVRATIRYRPLVPNAVGGYAISISFWPQTTTTPTSVDMNSITSTDVRILVQPGIASEHVIPSERLHYRNQGWRSVETSGVAEEEATSGLVMLCIHGSLVNSYTNTPYTGALGLLDFALELEFRNLTPGNTNTRVSRYSSTARHRLRRGADGTAELTTTAATRFMKDLYFTSTNGVGEIGRGIALTLFNLADTLLGGLPTELISSAGGQLFYSRPVVSANGEPTVKLYTSVENAQQDKGIAIPHDIDLGESRVVIQDYDNQHEQDRPTPSPAPSRPFSVLRANDVLWLSLTAAEYDQSTYGSSTGPVYVSDSVTLVNVATGAQAVARSLDWTKVTLDGRPLSTTQQYSKTFFVLPLRGKLSFWEAGTTKAGYPYNYNTTASDQLLVENAAGHRVAISTYTTSLGAGPVSISAVAVLAPHSALALLEDTMDYPARAHTFDDFCPECRPLGLQGCAFQSTVAELQRLKMKVGKTREL.

The N-terminal stretch at Met1–Ala19 is a signal peptide. Disordered regions lie at residues Pro18–Asp44 and Pro64–Pro123. The short motif at Arg28–Arg33 is the Nuclear localization signal element. Positions Gln92–Ala116 are enriched in low complexity. 2 N-linked (GlcNAc...) asparagine; by host glycosylation sites follow: Asn137 and Asn310. A particle formation region spans residues Ile368–Gln394. Residue Asn562 is glycosylated (N-linked (GlcNAc...) asparagine; by host). The tract at residues Thr585–Leu610 is oligomerization.

It belongs to the hepevirus capsid protein family. As to quaternary structure, homodimer. Self-assembles to form the capsid. The capsid is dominated by dimers that define the 30 morphological units. Interacts with phosphorylated protein ORF3. Interacts with host TMEM134. Interacts with host ASGR1 and ASGR2; these interactions facilitate infection of host hepatocytes. Post-translationally, cleaved by host proteases in the N-terminus. N-glycosylated. In terms of processing, not N-glycosylated. The C-terminus of the capsid protein ORF2 is truncated in non-enveloped virions shedded in feces, probably due to host proteases.

It localises to the secreted. The protein resides in the virion. It is found in the host cytoplasm. Its subcellular location is the host endoplasmic reticulum. The protein localises to the host Golgi apparatus. It localises to the host cell surface. The protein resides in the host nucleus. In terms of biological role, plays a role in the inhibition of host antibody-mediated neutralization without blocking viral cell entry. Its function is as follows. Forms an icosahedral capsid with a T=1 symmetry and a 34 nm diameter. The capsid is composed of 60 copies linked to each other. Binds to the 5' end of the genomic RNA to mediate genome encapsidation. Binds to heparin surface proteoglycans (HSPGs) to mediate viral entry. Additionally, the interactions with host ASGR1 and ASGR2 facilitate viral infection of hepatocytes. Inhibits IFN production by blocking host TBK1-induced IRF3 phosphorylation. The nuclear form probably modulates host gene expression. The chain is Pro-secreted protein ORF2 from Homo sapiens (Human).